Here is a 294-residue protein sequence, read N- to C-terminus: Phosphoribosylaminoimidazole-succinocarboxamide synthase (294 aa).

This sequence belongs to the SAICAR synthetase family.

It catalyses the reaction 5-amino-1-(5-phospho-D-ribosyl)imidazole-4-carboxylate + L-aspartate + ATP = (2S)-2-[5-amino-1-(5-phospho-beta-D-ribosyl)imidazole-4-carboxamido]succinate + ADP + phosphate + 2 H(+). It participates in purine metabolism; IMP biosynthesis via de novo pathway; 5-amino-1-(5-phospho-D-ribosyl)imidazole-4-carboxamide from 5-amino-1-(5-phospho-D-ribosyl)imidazole-4-carboxylate: step 1/2. The polypeptide is Phosphoribosylaminoimidazole-succinocarboxamide synthase (Rhodococcus jostii (strain RHA1)).